The primary structure comprises 215 residues: Cytochrome b6 (215 aa).

At Met1–Asn31 the chain is on the cytoplasmic side. Residues Ile32–Phe52 form a helical membrane-spanning segment. Residue Cys35 coordinates heme c. The Lumenal, thylakoid segment spans residues Ala53 to Ser89. Residues Arg83, His86, His100, and Arg103 each contribute to the heme b site. The helical transmembrane segment at Ala90–Phe110 threads the bilayer. Over Lys111–Glu115 the chain is Cytoplasmic. A helical membrane pass occupies residues Leu116–Tyr136. Residues Ser137–Ser185 are Lumenal, thylakoid-facing. The helical transmembrane segment at Ala186 to Ile206 threads the bilayer. His187 and His202 together coordinate heme b. The Cytoplasmic portion of the chain corresponds to Arg207–Leu215. Lys208 is a heme c binding site.

Belongs to the cytochrome b family. PetB subfamily. In terms of assembly, the 4 large subunits of the cytochrome b6-f complex are cytochrome b6, subunit IV (17 kDa polypeptide, PetD), cytochrome f and the Rieske protein, while the 4 small subunits are PetG, PetL, PetM and PetN. The complex functions as a dimer. Requires heme b as cofactor. The cofactor is heme c.

It localises to the cellular thylakoid membrane. Component of the cytochrome b6-f complex, which mediates electron transfer between photosystem II (PSII) and photosystem I (PSI), cyclic electron flow around PSI, and state transitions. This Mastigocladus laminosus (Fischerella sp.) protein is Cytochrome b6.